Reading from the N-terminus, the 158-residue chain is Transcription elongation factor GreA (158 aa).

A coiled-coil region spans residues 5-75 (EKLPMLAEGY…DLEDRVSRAQ (71 aa)).

The protein belongs to the GreA/GreB family.

In terms of biological role, necessary for efficient RNA polymerase transcription elongation past template-encoded arresting sites. The arresting sites in DNA have the property of trapping a certain fraction of elongating RNA polymerases that pass through, resulting in locked ternary complexes. Cleavage of the nascent transcript by cleavage factors such as GreA or GreB allows the resumption of elongation from the new 3'terminus. GreA releases sequences of 2 to 3 nucleotides. The sequence is that of Transcription elongation factor GreA from Novosphingobium aromaticivorans (strain ATCC 700278 / DSM 12444 / CCUG 56034 / CIP 105152 / NBRC 16084 / F199).